The primary structure comprises 204 residues: SOSS complex subunit B homolog (204 aa).

The segment at residues 24-94 (IVLEVGVATV…TLYSGKNGEV (71 aa)) is a DNA-binding region (OB). Residues 115 to 204 (RAEQQAVANP…GRGGLKGERR (90 aa)) form a disordered region. Low complexity-rich tracts occupy residues 122 to 131 (ANPAATPAGL) and 139 to 183 (GLPA…QTTT). The span at 187 to 198 (TRGGRGGGGRGG) shows a compositional bias: gly residues.

Belongs to the SOSS-B family.

The polypeptide is SOSS complex subunit B homolog (Drosophila melanogaster (Fruit fly)).